An 892-amino-acid polypeptide reads, in one-letter code: Alanine--tRNA ligase (892 aa).

Zn(2+) contacts are provided by His-596, His-600, Cys-700, and His-704.

It belongs to the class-II aminoacyl-tRNA synthetase family. Zn(2+) serves as cofactor.

The protein localises to the cytoplasm. The catalysed reaction is tRNA(Ala) + L-alanine + ATP = L-alanyl-tRNA(Ala) + AMP + diphosphate. Catalyzes the attachment of alanine to tRNA(Ala) in a two-step reaction: alanine is first activated by ATP to form Ala-AMP and then transferred to the acceptor end of tRNA(Ala). Also edits incorrectly charged Ser-tRNA(Ala) and Gly-tRNA(Ala) via its editing domain. This is Alanine--tRNA ligase from Methanococcus maripaludis (strain C5 / ATCC BAA-1333).